The sequence spans 190 residues: Nucleoside triphosphate pyrophosphatase (190 aa).

Aspartate 69 (proton acceptor) is an active-site residue.

This sequence belongs to the Maf family. Requires a divalent metal cation as cofactor.

It is found in the cytoplasm. It catalyses the reaction a ribonucleoside 5'-triphosphate + H2O = a ribonucleoside 5'-phosphate + diphosphate + H(+). The enzyme catalyses a 2'-deoxyribonucleoside 5'-triphosphate + H2O = a 2'-deoxyribonucleoside 5'-phosphate + diphosphate + H(+). Nucleoside triphosphate pyrophosphatase. May have a dual role in cell division arrest and in preventing the incorporation of modified nucleotides into cellular nucleic acids. This is Nucleoside triphosphate pyrophosphatase from Helicobacter pylori (strain ATCC 700392 / 26695) (Campylobacter pylori).